Consider the following 168-residue polypeptide: G/U mismatch-specific DNA glycosylase (168 aa).

The protein belongs to the uracil-DNA glycosylase (UDG) superfamily. TDG/mug family. In terms of assembly, binds DNA as a monomer.

Its subcellular location is the cytoplasm. It carries out the reaction Specifically hydrolyzes mismatched double-stranded DNA and polynucleotides, releasing free uracil.. Functionally, excises ethenocytosine and uracil, which can arise by alkylation or deamination of cytosine, respectively, from the corresponding mispairs with guanine in ds-DNA. It is capable of hydrolyzing the carbon-nitrogen bond between the sugar-phosphate backbone of the DNA and the mispaired base. The complementary strand guanine functions in substrate recognition. Required for DNA damage lesion repair in stationary-phase cells. The polypeptide is G/U mismatch-specific DNA glycosylase (Salmonella paratyphi B (strain ATCC BAA-1250 / SPB7)).